Consider the following 295-residue polypeptide: Pyridoxal 5'-phosphate synthase subunit PdxS (295 aa).

Position 25 (Asp-25) interacts with D-ribose 5-phosphate. Lys-82 functions as the Schiff-base intermediate with D-ribose 5-phosphate in the catalytic mechanism. Gly-154 serves as a coordination point for D-ribose 5-phosphate. Arg-166 contributes to the D-glyceraldehyde 3-phosphate binding site. Residues Gly-215 and Gly-236 to Ser-237 each bind D-ribose 5-phosphate.

It belongs to the PdxS/SNZ family. As to quaternary structure, in the presence of PdxT, forms a dodecamer of heterodimers.

It catalyses the reaction aldehydo-D-ribose 5-phosphate + D-glyceraldehyde 3-phosphate + L-glutamine = pyridoxal 5'-phosphate + L-glutamate + phosphate + 3 H2O + H(+). It functions in the pathway cofactor biosynthesis; pyridoxal 5'-phosphate biosynthesis. Its function is as follows. Catalyzes the formation of pyridoxal 5'-phosphate from ribose 5-phosphate (RBP), glyceraldehyde 3-phosphate (G3P) and ammonia. The ammonia is provided by the PdxT subunit. Can also use ribulose 5-phosphate and dihydroxyacetone phosphate as substrates, resulting from enzyme-catalyzed isomerization of RBP and G3P, respectively. The chain is Pyridoxal 5'-phosphate synthase subunit PdxS from Actinobacillus pleuropneumoniae serotype 3 (strain JL03).